The primary structure comprises 326 residues: Phosphate acyltransferase (326 aa).

Belongs to the PlsX family. As to quaternary structure, homodimer. Probably interacts with PlsY.

It is found in the cytoplasm. The catalysed reaction is a fatty acyl-[ACP] + phosphate = an acyl phosphate + holo-[ACP]. It participates in lipid metabolism; phospholipid metabolism. In terms of biological role, catalyzes the reversible formation of acyl-phosphate (acyl-PO(4)) from acyl-[acyl-carrier-protein] (acyl-ACP). This enzyme utilizes acyl-ACP as fatty acyl donor, but not acyl-CoA. The chain is Phosphate acyltransferase from Thermus thermophilus (strain ATCC BAA-163 / DSM 7039 / HB27).